Reading from the N-terminus, the 145-residue chain is Large ribosomal subunit protein uL11 (145 aa).

Belongs to the universal ribosomal protein uL11 family. Part of the ribosomal stalk of the 50S ribosomal subunit. Interacts with L10 and the large rRNA to form the base of the stalk. L10 forms an elongated spine to which L12 dimers bind in a sequential fashion forming a multimeric L10(L12)X complex. Post-translationally, one or more lysine residues are methylated.

Forms part of the ribosomal stalk which helps the ribosome interact with GTP-bound translation factors. In Flavobacterium johnsoniae (strain ATCC 17061 / DSM 2064 / JCM 8514 / BCRC 14874 / CCUG 350202 / NBRC 14942 / NCIMB 11054 / UW101) (Cytophaga johnsonae), this protein is Large ribosomal subunit protein uL11.